The chain runs to 215 residues: Ribonuclease T (215 aa).

Residues 20–194 enclose the Exonuclease domain; it reads VVIDVETAGF…YDTEQTAQLF (175 aa). 4 residues coordinate Mg(2+): Asp23, Glu25, His181, and Asp186. The active-site Proton donor/acceptor is the His181.

Belongs to the RNase T family. In terms of assembly, homodimer. The cofactor is Mg(2+).

Trims short 3' overhangs of a variety of RNA species, leaving a one or two nucleotide 3' overhang. Responsible for the end-turnover of tRNA: specifically removes the terminal AMP residue from uncharged tRNA (tRNA-C-C-A). Also appears to be involved in tRNA biosynthesis. In Klebsiella pneumoniae subsp. pneumoniae (strain ATCC 700721 / MGH 78578), this protein is Ribonuclease T.